Consider the following 361-residue polypeptide: S-adenosylmethionine decarboxylase proenzyme (361 aa).

Residues Glu8 and Glu11 contribute to the active site. Ser68 serves as the catalytic Schiff-base intermediate with substrate; via pyruvic acid. The residue at position 68 (Ser68) is a Pyruvic acid (Ser); by autocatalysis. The active-site Proton donor; for catalytic activity is Cys82. Catalysis depends on proton acceptor; for processing activity residues Ser234 and His247. Residues 341–361 are disordered; the sequence is SCGSPRSTLHRCWSETENEEE.

The protein belongs to the eukaryotic AdoMetDC family. Pyruvate is required as a cofactor. Post-translationally, is synthesized initially as an inactive proenzyme. Formation of the active enzyme involves a self-maturation process in which the active site pyruvoyl group is generated from an internal serine residue via an autocatalytic post-translational modification. Two non-identical subunits are generated from the proenzyme in this reaction, and the pyruvate is formed at the N-terminus of the alpha chain, which is derived from the carboxyl end of the proenzyme. The post-translation cleavage follows an unusual pathway, termed non-hydrolytic serinolysis, in which the side chain hydroxyl group of the serine supplies its oxygen atom to form the C-terminus of the beta chain, while the remainder of the serine residue undergoes an oxidative deamination to produce ammonia and the pyruvoyl group blocking the N-terminus of the alpha chain.

It carries out the reaction S-adenosyl-L-methionine + H(+) = S-adenosyl 3-(methylsulfanyl)propylamine + CO2. Its pathway is amine and polyamine biosynthesis; S-adenosylmethioninamine biosynthesis; S-adenosylmethioninamine from S-adenosyl-L-methionine: step 1/1. The chain is S-adenosylmethionine decarboxylase proenzyme (SAMDC) from Helianthus annuus (Common sunflower).